We begin with the raw amino-acid sequence, 85 residues long: ATP synthase subunit c (85 aa).

A run of 2 helical transmembrane segments spans residues 10-30 (IAVA…FAVL) and 53-73 (FIIA…ALLF).

It belongs to the ATPase C chain family. In terms of assembly, F-type ATPases have 2 components, F(1) - the catalytic core - and F(0) - the membrane proton channel. F(1) has five subunits: alpha(3), beta(3), gamma(1), delta(1), epsilon(1). F(0) has three main subunits: a(1), b(2) and c(10-14). The alpha and beta chains form an alternating ring which encloses part of the gamma chain. F(1) is attached to F(0) by a central stalk formed by the gamma and epsilon chains, while a peripheral stalk is formed by the delta and b chains.

It localises to the cell inner membrane. Functionally, f(1)F(0) ATP synthase produces ATP from ADP in the presence of a proton or sodium gradient. F-type ATPases consist of two structural domains, F(1) containing the extramembraneous catalytic core and F(0) containing the membrane proton channel, linked together by a central stalk and a peripheral stalk. During catalysis, ATP synthesis in the catalytic domain of F(1) is coupled via a rotary mechanism of the central stalk subunits to proton translocation. Key component of the F(0) channel; it plays a direct role in translocation across the membrane. A homomeric c-ring of between 10-14 subunits forms the central stalk rotor element with the F(1) delta and epsilon subunits. This chain is ATP synthase subunit c, found in Vibrio cholerae serotype O1 (strain ATCC 39315 / El Tor Inaba N16961).